A 167-amino-acid polypeptide reads, in one-letter code: Ubiquitin-fold modifier-conjugating enzyme 1 (167 aa).

The active-site Glycyl thioester intermediate is Cys-116.

The protein belongs to the ubiquitin-conjugating enzyme family. UFC1 subfamily. As to quaternary structure, interacts with UBA5 (via C-terminus). Interacts with UFL1. Interacts with UFM1.

E2-like enzyme which specifically catalyzes the second step in ufmylation. Accepts the ubiquitin-like modifier UFM1 from the E1 enzyme UBA5 and forms an intermediate with UFM1 via a thioester linkage. Ufmylation is involved in various processes, such as ribosome recycling, response to DNA damage, interferon response or reticulophagy (also called ER-phagy). The sequence is that of Ubiquitin-fold modifier-conjugating enzyme 1 from Esox lucius (Northern pike).